Here is a 363-residue protein sequence, read N- to C-terminus: MIIDTPEVQDINSFSRLEYLKEVYGIIWMLVPIFTPVLGITIGVLAIVWLEREISAGIQQRIGPEYAGPLGILQALADGTKLLFKENLLPSRGDTRLFSIGPSIAVISILLSYLIIPFGSNLVLSDLNIGVFLWIAISSIAPIGLLMSGYGSNNKYSFLGGLRAAAQSISYEIPLTLCVLSISLLSNSSSTVDIVEAQSKYGFWGWNLWRQPIGFIVFLISSLAECERLPFDLPEAEEELVAGYQTEYSGIKFGLFYVASYLNLLVSSLFVTVLYLGGWDLSIPYIFVPEFFEINKAGEVFGTTIGIFITLAKTYLFLFIPITTRWTLPRLRMDQLLNLGWKFLLPISLGNLLLTTSSQLLSL.

Transmembrane regions (helical) follow at residues 30–50 (LVPI…IVWL), 98–118 (FSIG…IIPF), 129–149 (IGVF…LMSG), 248–268 (YSGI…LVSS), 300–320 (VFGT…FLFI), and 336–356 (LLNL…LLTT).

Belongs to the complex I subunit 1 family. NDH is composed of at least 16 different subunits, 5 of which are encoded in the nucleus.

The protein resides in the plastid. The protein localises to the chloroplast thylakoid membrane. It catalyses the reaction a plastoquinone + NADH + (n+1) H(+)(in) = a plastoquinol + NAD(+) + n H(+)(out). It carries out the reaction a plastoquinone + NADPH + (n+1) H(+)(in) = a plastoquinol + NADP(+) + n H(+)(out). In terms of biological role, NDH shuttles electrons from NAD(P)H:plastoquinone, via FMN and iron-sulfur (Fe-S) centers, to quinones in the photosynthetic chain and possibly in a chloroplast respiratory chain. The immediate electron acceptor for the enzyme in this species is believed to be plastoquinone. Couples the redox reaction to proton translocation, and thus conserves the redox energy in a proton gradient. In Vitis vinifera (Grape), this protein is NAD(P)H-quinone oxidoreductase subunit 1, chloroplastic.